We begin with the raw amino-acid sequence, 285 residues long: Coagulation factor IX (285 aa).

Tyr-23 bears the Sulfotyrosine mark. Residue Asn-25 is glycosylated (N-linked (GlcNAc...) asparagine). Residue Thr-27 is modified to Phosphothreonine; alternate. Residue Thr-27 is glycosylated (O-linked (GalNAc...) threonine; alternate). Asn-45 carries an N-linked (GlcNAc...) asparagine glycan. An O-linked (GalNAc...) threonine glycan is attached at Thr-47. The 227-residue stretch at 59-285 (VVGGEDAKPG…YTKVSRYVNW (227 aa)) folds into the Peptidase S1 domain. Cys-84 and Cys-100 are oxidised to a cystine. Catalysis depends on His-99, which acts as the Charge relay system. Asn-115, Glu-120, and Glu-123 together coordinate Ca(2+). N-linked (GlcNAc...) asparagine glycans are attached at residues Asn-127 and Asn-138. The Charge relay system role is filled by Asp-147. Disulfide bonds link Cys-214-Cys-228 and Cys-239-Cys-267. The active-site Charge relay system is the Ser-243.

This sequence belongs to the peptidase S1 family. In terms of assembly, heterodimer of a light chain and a heavy chain; disulfide-linked. Interacts (inactive and activated) with F11 (activated) in calcium-dependent manner. Interacts with SERPINC1. Activated by factor XIa, which excises the activation peptide. The propeptide can also be removed by snake venom protease. Activated by coagulation factor VIIa-tissue factor (F7-F3) complex in calcium-dependent manner.

It localises to the secreted. It catalyses the reaction Selective cleavage of Arg-|-Ile bond in factor X to form factor Xa.. Functionally, factor IX is a vitamin K-dependent plasma protein that participates in the intrinsic pathway of blood coagulation by converting factor X to its active form in the presence of Ca(2+) ions, phospholipids, and factor VIIIa. The polypeptide is Coagulation factor IX (F9) (Cavia porcellus (Guinea pig)).